The sequence spans 201 residues: Dephospho-CoA kinase (201 aa).

A DPCK domain is found at 7–201; that stretch reads AIALSGGIGT…IETIKKDFHV (195 aa). An ATP-binding site is contributed by 15–20; sequence GTGKST.

It belongs to the CoaE family.

The protein localises to the cytoplasm. It catalyses the reaction 3'-dephospho-CoA + ATP = ADP + CoA + H(+). Its pathway is cofactor biosynthesis; coenzyme A biosynthesis; CoA from (R)-pantothenate: step 5/5. Catalyzes the phosphorylation of the 3'-hydroxyl group of dephosphocoenzyme A to form coenzyme A. In Wolinella succinogenes (strain ATCC 29543 / DSM 1740 / CCUG 13145 / JCM 31913 / LMG 7466 / NCTC 11488 / FDC 602W) (Vibrio succinogenes), this protein is Dephospho-CoA kinase.